Consider the following 346-residue polypeptide: tRNA(Ile)-lysidine synthase (346 aa).

Position 32–37 (32–37 (SGGPDS)) interacts with ATP.

This sequence belongs to the tRNA(Ile)-lysidine synthase family.

Its subcellular location is the cytoplasm. It catalyses the reaction cytidine(34) in tRNA(Ile2) + L-lysine + ATP = lysidine(34) in tRNA(Ile2) + AMP + diphosphate + H(+). Functionally, ligates lysine onto the cytidine present at position 34 of the AUA codon-specific tRNA(Ile) that contains the anticodon CAU, in an ATP-dependent manner. Cytidine is converted to lysidine, thus changing the amino acid specificity of the tRNA from methionine to isoleucine. The protein is tRNA(Ile)-lysidine synthase of Rhodopseudomonas palustris (strain ATCC BAA-98 / CGA009).